The chain runs to 689 residues: Long-chain-fatty-acid--CoA ligase 2 (689 aa).

252 to 263 lines the ATP pocket; the sequence is YTSGSTGKPKGV. Residues 518 to 567 carry the FACS motif; sequence DGWFKTGDVGEIAKGNTLRLIDRKKNIVKSLNGEYIALEKIEAQFFTSPL.

Belongs to the ATP-dependent AMP-binding enzyme family. It depends on Mg(2+) as a cofactor.

It is found in the golgi apparatus. The protein resides in the vacuole membrane. It catalyses the reaction a long-chain fatty acid + ATP + CoA = a long-chain fatty acyl-CoA + AMP + diphosphate. Its function is as follows. Esterification, concomitant with transport, of endogenous long-chain fatty acids into metabolically active CoA thioesters for subsequent degradation or incorporation into phospholipids. Plays an important role in the determination of viability in the stationary phase. This is Long-chain-fatty-acid--CoA ligase 2 (lcf2) from Schizosaccharomyces pombe (strain 972 / ATCC 24843) (Fission yeast).